Reading from the N-terminus, the 195-residue chain is Peptidyl-tRNA hydrolase (195 aa).

Tyr18 is a tRNA binding site. His23 (proton acceptor) is an active-site residue. Residues Tyr69, Asn71, and Asn117 each contribute to the tRNA site.

It belongs to the PTH family. Monomer.

It localises to the cytoplasm. The catalysed reaction is an N-acyl-L-alpha-aminoacyl-tRNA + H2O = an N-acyl-L-amino acid + a tRNA + H(+). Hydrolyzes ribosome-free peptidyl-tRNAs (with 1 or more amino acids incorporated), which drop off the ribosome during protein synthesis, or as a result of ribosome stalling. Functionally, catalyzes the release of premature peptidyl moieties from peptidyl-tRNA molecules trapped in stalled 50S ribosomal subunits, and thus maintains levels of free tRNAs and 50S ribosomes. This Nitrosomonas eutropha (strain DSM 101675 / C91 / Nm57) protein is Peptidyl-tRNA hydrolase.